The following is a 235-amino-acid chain: NADH-quinone oxidoreductase subunit C (235 aa).

This sequence belongs to the complex I 30 kDa subunit family. NDH-1 is composed of 14 different subunits. Subunits NuoB, C, D, E, F, and G constitute the peripheral sector of the complex.

The protein resides in the cell membrane. It catalyses the reaction a quinone + NADH + 5 H(+)(in) = a quinol + NAD(+) + 4 H(+)(out). In terms of biological role, NDH-1 shuttles electrons from NADH, via FMN and iron-sulfur (Fe-S) centers, to quinones in the respiratory chain. The immediate electron acceptor for the enzyme in this species is believed to be a menaquinone. Couples the redox reaction to proton translocation (for every two electrons transferred, four hydrogen ions are translocated across the cytoplasmic membrane), and thus conserves the redox energy in a proton gradient. This is NADH-quinone oxidoreductase subunit C from Mycobacterium avium (strain 104).